The chain runs to 319 residues: tRNA dimethylallyltransferase (319 aa).

An ATP-binding site is contributed by 10–17 (GPTAVGKT). Residue 12–17 (TAVGKT) participates in substrate binding. An interaction with substrate tRNA region spans residues 35 to 38 (DSMQ).

Belongs to the IPP transferase family. Monomer. Mg(2+) serves as cofactor.

The enzyme catalyses adenosine(37) in tRNA + dimethylallyl diphosphate = N(6)-dimethylallyladenosine(37) in tRNA + diphosphate. Its function is as follows. Catalyzes the transfer of a dimethylallyl group onto the adenine at position 37 in tRNAs that read codons beginning with uridine, leading to the formation of N6-(dimethylallyl)adenosine (i(6)A). The protein is tRNA dimethylallyltransferase of Symbiobacterium thermophilum (strain DSM 24528 / JCM 14929 / IAM 14863 / T).